The following is a 336-amino-acid chain: m7GpppX diphosphatase (336 aa).

The disordered stretch occupies residues 1–36 (MADTAPQLKRKREQEAEEAETPSTEEKEAGVGNGTS). N-acetylalanine is present on Ala2. Residues 9–12 (KRKR) carry the nuclear localization signal (NLS) motif. Position 23 is a phosphoserine (Ser23). An N6-acetyllysine mark is found at Lys137 and Lys141. Positions 141 to 153 (KYMRQDLRLIRET) match the nuclear export sequence (NES) motif. Substrate is bound by residues Trp174, Glu184, Asp204, Lys206, and 267-278 (HYLPSYYHLHVH). Positions 274 to 278 (HLHVH) match the Histidine triad motif motif. Residue His276 is the Nucleophile of the active site.

This sequence belongs to the HIT family. As to quaternary structure, homodimer. Associates with components of the exosome multienzyme ribonuclease complex, such as EXOSC3 and EXOSC4. Interacts with NDOR1.

It is found in the cytoplasm. The protein resides in the nucleus. The catalysed reaction is a 5'-end (N(7)-methyl 5'-triphosphoguanosine)-ribonucleoside in mRNA + H2O = N(7)-methyl-GMP + a 5'-end diphospho-ribonucleoside in mRNA + 2 H(+). The hydrolytic product 7-methylguanosine diphosphate (m7GDP) efficiently inhibits the decapping scavenger activity and acts as a competitive inhibitor in vitro. Inhibited by 2,4-diaminoquinazoline. Its function is as follows. Decapping scavenger enzyme that catalyzes the cleavage of a residual cap structure following the degradation of mRNAs by the 3'-&gt;5' exosome-mediated mRNA decay pathway. Hydrolyzes cap analog structures like 7-methylguanosine nucleoside triphosphate (m7GpppG) with up to 10 nucleotide substrates (small capped oligoribonucleotides) and specifically releases 5'-phosphorylated RNA fragments and 7-methylguanosine monophosphate (m7GMP). Cleaves cap analog structures like tri-methyl guanosine nucleoside triphosphate (m3(2,2,7)GpppG) with very poor efficiency. Does not hydrolyze unmethylated cap analog (GpppG) and shows no decapping activity on intact m7GpppG-capped mRNA molecules longer than 25 nucleotides. Does not hydrolyze 7-methylguanosine diphosphate (m7GDP) to m7GMP. May also play a role in the 5'-&gt;3 mRNA decay pathway; m7GDP, the downstream product released by the 5'-&gt;3' mRNA mediated decapping activity, may be also converted by DCPS to m7GMP. Binds to m7GpppG and strongly to m7GDP. Plays a role in first intron splicing of pre-mRNAs. Inhibits activation-induced cell death. The sequence is that of m7GpppX diphosphatase (Dcps) from Rattus norvegicus (Rat).